A 167-amino-acid polypeptide reads, in one-letter code: Large ribosomal subunit protein uL23 (167 aa).

The tract at residues 1 to 130 (MNVNEIIKGP…ELEAKNKEIA (130 aa)) is large ribosomal subunit protein uL23. 2 disordered regions span residues 91–112 (FEDESPQDQKDSETISENTDEK) and 137–167 (QAELAKKESETNENQEKKIENQTENQENSAK). Composition is skewed to basic and acidic residues over residues 97-112 (QDQKDSETISENTDEK) and 137-157 (QAELAKKESETNENQEKKIEN). Residues 131 to 167 (EKLAKKQAELAKKESETNENQEKKIENQTENQENSAK) are unknown. Residues 158 to 167 (QTENQENSAK) show a composition bias toward polar residues.

It belongs to the universal ribosomal protein uL23 family. In terms of assembly, part of the 50S ribosomal subunit. Contacts protein L29, and trigger factor when it is bound to the ribosome.

Functionally, one of the early assembly proteins it binds 23S rRNA. One of the proteins that surrounds the polypeptide exit tunnel on the outside of the ribosome. Forms the main docking site for trigger factor binding to the ribosome. The protein is Large ribosomal subunit protein uL23 of Mesomycoplasma hyopneumoniae (strain 7448) (Mycoplasma hyopneumoniae).